The primary structure comprises 102 residues: Large ribosomal subunit protein bL21 (102 aa).

The protein belongs to the bacterial ribosomal protein bL21 family. In terms of assembly, part of the 50S ribosomal subunit. Contacts protein L20.

In terms of biological role, this protein binds to 23S rRNA in the presence of protein L20. This Sulfurimonas denitrificans (strain ATCC 33889 / DSM 1251) (Thiomicrospira denitrificans (strain ATCC 33889 / DSM 1251)) protein is Large ribosomal subunit protein bL21.